A 75-amino-acid polypeptide reads, in one-letter code: Alpha-elapitoxin-Bc2b (75 aa).

A signal peptide spans 1–2; the sequence is YT. 5 disulfide bridges follow: Cys-5-Cys-24, Cys-17-Cys-45, Cys-30-Cys-34, Cys-49-Cys-60, and Cys-61-Cys-66.

In terms of assembly, monomer in solution, homodimer in crystal state. In terms of tissue distribution, expressed by the venom gland.

Its subcellular location is the secreted. Functionally, binds to muscular and neuronal nicotinic acetylcholine receptor (nAChR) and inhibits acetylcholine from binding to the receptor, thereby impairing neuromuscular and neuronal transmission. Blocks muscle type nAChR. Also binds with high affinity to alpha-7/CHRNA7 nAChRs. In addition, shows a weak inhibition of neuronal alpha-3-beta-2/CHRNA3-CHRNB2 nAChR. Selectively binds to alpha-1-delta subunit interface of the mouse muscle nicotinic acetylcholine receptor, with a 10-fold higher affinity for the adult than for the fetal receptors. In vivo, when intraperitoneally injected into mice, causes flaccid paralysis and respiratory distress, followed by death within 2-4 hours. In Bungarus candidus (Malayan krait), this protein is Alpha-elapitoxin-Bc2b.